A 431-amino-acid chain; its full sequence is Tol-Pal system protein TolB (431 aa).

Positions 1–26 (MRLMTKLGFRALVASCLIAAGGAANA) are cleaved as a signal peptide. The segment at 411-431 (PQILSVQGGSVREPSWGPFMQ) is disordered.

It belongs to the TolB family. As to quaternary structure, the Tol-Pal system is composed of five core proteins: the inner membrane proteins TolA, TolQ and TolR, the periplasmic protein TolB and the outer membrane protein Pal. They form a network linking the inner and outer membranes and the peptidoglycan layer.

It localises to the periplasm. In terms of biological role, part of the Tol-Pal system, which plays a role in outer membrane invagination during cell division and is important for maintaining outer membrane integrity. This Burkholderia ambifaria (strain MC40-6) protein is Tol-Pal system protein TolB.